Consider the following 239-residue polypeptide: Uridylate kinase (239 aa).

12 to 15 (KLSG) is an ATP binding site. An involved in allosteric activation by GTP region spans residues 21–26 (GEQGFG). Position 55 (Gly55) interacts with UMP. Residues Gly56 and Arg60 each coordinate ATP. Residues Asp75 and 136–143 (TGNPYFST) each bind UMP. ATP contacts are provided by Thr163, Tyr169, and Asp172.

This sequence belongs to the UMP kinase family. In terms of assembly, homohexamer.

It localises to the cytoplasm. The enzyme catalyses UMP + ATP = UDP + ADP. The protein operates within pyrimidine metabolism; CTP biosynthesis via de novo pathway; UDP from UMP (UMPK route): step 1/1. Allosterically activated by GTP. Inhibited by UTP. Catalyzes the reversible phosphorylation of UMP to UDP. In Koribacter versatilis (strain Ellin345), this protein is Uridylate kinase.